The following is a 163-amino-acid chain: Nucleotide-binding protein SYNPCC7002_A1983 (163 aa).

This sequence belongs to the YajQ family.

Its function is as follows. Nucleotide-binding protein. This is Nucleotide-binding protein SYNPCC7002_A1983 from Picosynechococcus sp. (strain ATCC 27264 / PCC 7002 / PR-6) (Agmenellum quadruplicatum).